The primary structure comprises 284 residues: 4-diphosphocytidyl-2-C-methyl-D-erythritol kinase (284 aa).

Lysine 14 is an active-site residue. Residue 98–108 participates in ATP binding; sequence PMGGGLGGGSS. The active site involves aspartate 140.

Belongs to the GHMP kinase family. IspE subfamily.

The enzyme catalyses 4-CDP-2-C-methyl-D-erythritol + ATP = 4-CDP-2-C-methyl-D-erythritol 2-phosphate + ADP + H(+). Its pathway is isoprenoid biosynthesis; isopentenyl diphosphate biosynthesis via DXP pathway; isopentenyl diphosphate from 1-deoxy-D-xylulose 5-phosphate: step 3/6. Functionally, catalyzes the phosphorylation of the position 2 hydroxy group of 4-diphosphocytidyl-2C-methyl-D-erythritol. The sequence is that of 4-diphosphocytidyl-2-C-methyl-D-erythritol kinase from Shewanella sp. (strain ANA-3).